Consider the following 215-residue polypeptide: Protein Syd (215 aa).

This sequence belongs to the Syd family.

The protein resides in the cell inner membrane. Its function is as follows. Interacts with the SecY protein in vivo. May bind preferentially to an uncomplexed state of SecY, thus functioning either as a chelating agent for excess SecY in the cell or as a regulatory factor that negatively controls the translocase function. In Shewanella amazonensis (strain ATCC BAA-1098 / SB2B), this protein is Protein Syd.